We begin with the raw amino-acid sequence, 472 residues long: uncharacterized protein (472 aa).

Low complexity-rich tracts occupy residues 1 to 21 (MAFS…SRPG) and 63 to 74 (ASSLPAPASSSP). Residues 1–74 (MAFSSSSLRR…SLPAPASSSP (74 aa)) are disordered.

This is an uncharacterized protein from Equus caballus (Horse).